Reading from the N-terminus, the 159-residue chain is ATP synthase subunit b (159 aa).

The chain crosses the membrane as a helical span at residues 4-24 (VGINGTLIVQLVTFVILVALL).

This sequence belongs to the ATPase B chain family. F-type ATPases have 2 components, F(1) - the catalytic core - and F(0) - the membrane proton channel. F(1) has five subunits: alpha(3), beta(3), gamma(1), delta(1), epsilon(1). F(0) has three main subunits: a(1), b(2) and c(10-14). The alpha and beta chains form an alternating ring which encloses part of the gamma chain. F(1) is attached to F(0) by a central stalk formed by the gamma and epsilon chains, while a peripheral stalk is formed by the delta and b chains.

It localises to the cell inner membrane. In terms of biological role, f(1)F(0) ATP synthase produces ATP from ADP in the presence of a proton or sodium gradient. F-type ATPases consist of two structural domains, F(1) containing the extramembraneous catalytic core and F(0) containing the membrane proton channel, linked together by a central stalk and a peripheral stalk. During catalysis, ATP synthesis in the catalytic domain of F(1) is coupled via a rotary mechanism of the central stalk subunits to proton translocation. Component of the F(0) channel, it forms part of the peripheral stalk, linking F(1) to F(0). In Acidithiobacillus ferridurans, this protein is ATP synthase subunit b.